Consider the following 350-residue polypeptide: Chorismate synthase (350 aa).

Arginine 48 is an NADP(+) binding site. Residues 125–127 (RSS), glycine 277, 292–296 (KPIPS), and arginine 318 each bind FMN.

This sequence belongs to the chorismate synthase family. Homotetramer. The cofactor is FMNH2.

It carries out the reaction 5-O-(1-carboxyvinyl)-3-phosphoshikimate = chorismate + phosphate. The protein operates within metabolic intermediate biosynthesis; chorismate biosynthesis; chorismate from D-erythrose 4-phosphate and phosphoenolpyruvate: step 7/7. Catalyzes the anti-1,4-elimination of the C-3 phosphate and the C-6 proR hydrogen from 5-enolpyruvylshikimate-3-phosphate (EPSP) to yield chorismate, which is the branch point compound that serves as the starting substrate for the three terminal pathways of aromatic amino acid biosynthesis. This reaction introduces a second double bond into the aromatic ring system. The sequence is that of Chorismate synthase from Maridesulfovibrio salexigens (strain ATCC 14822 / DSM 2638 / NCIMB 8403 / VKM B-1763) (Desulfovibrio salexigens).